A 180-amino-acid chain; its full sequence is MVKESIPKEGQTIKIQSYKHDGNIHRVWSETTILKGTEHVVIGGNDHTLVTESDSRTWITREPAIVYFHSEFWFNVICMFREDGVYYYCNLSSPFVCDDEALKYIDYDLDIKVYPNGKYHLLDEDEYEQHMRQMNYSSDIDVILRRNVDILQQWIEQKKGPFAPDFIKVWRERYKKIRNY.

Arg-26 acts as the Proton donor in catalysis. 6 residues coordinate Mg(2+): Asn-90, Asp-106, Asp-108, Asp-110, Asp-123, and Glu-126.

It belongs to the Ntdp family. Requires Mg(2+) as cofactor.

The catalysed reaction is a ribonucleoside 5'-triphosphate + H2O = a ribonucleoside 5'-diphosphate + phosphate + H(+). The enzyme catalyses a ribonucleoside 5'-diphosphate + H2O = a ribonucleoside 5'-phosphate + phosphate + H(+). Functionally, has nucleoside phosphatase activity towards nucleoside triphosphates and nucleoside diphosphates. The protein is Nucleoside triphosphate/diphosphate phosphatase of Staphylococcus saprophyticus subsp. saprophyticus (strain ATCC 15305 / DSM 20229 / NCIMB 8711 / NCTC 7292 / S-41).